We begin with the raw amino-acid sequence, 504 residues long: Pyruvate kinase (504 aa).

Arg53 lines the substrate pocket. Residues Asn55, Ser57, Asp88, and Thr89 each contribute to the K(+) site. An ATP-binding site is contributed by 55–58; the sequence is NFSH. Residues Arg95 and Lys181 each contribute to the ATP site. Glu246 is a binding site for Mg(2+). Gly269, Asp270, and Thr302 together coordinate substrate. Position 270 (Asp270) interacts with Mg(2+).

This sequence belongs to the pyruvate kinase family. As to quaternary structure, homotetramer. It depends on Mg(2+) as a cofactor. K(+) is required as a cofactor.

Its subcellular location is the cytoplasm. It carries out the reaction pyruvate + ATP = phosphoenolpyruvate + ADP + H(+). Its pathway is carbohydrate degradation; glycolysis; pyruvate from D-glyceraldehyde 3-phosphate: step 5/5. The sequence is that of Pyruvate kinase (CDC19) from Candida albicans (strain SC5314 / ATCC MYA-2876) (Yeast).